The primary structure comprises 141 residues: Large ribosomal subunit protein uL11 (141 aa).

This sequence belongs to the universal ribosomal protein uL11 family. Part of the ribosomal stalk of the 50S ribosomal subunit. Interacts with L10 and the large rRNA to form the base of the stalk. L10 forms an elongated spine to which L12 dimers bind in a sequential fashion forming a multimeric L10(L12)X complex. One or more lysine residues are methylated.

Functionally, forms part of the ribosomal stalk which helps the ribosome interact with GTP-bound translation factors. This chain is Large ribosomal subunit protein uL11, found in Oceanobacillus iheyensis (strain DSM 14371 / CIP 107618 / JCM 11309 / KCTC 3954 / HTE831).